The sequence spans 426 residues: Mitogen-activated protein kinase 8 (426 aa).

In terms of domain architecture, Protein kinase spans 26–321 (YQNLKPIGSG…VDDALQHPYI (296 aa)). ATP is bound by residues 33–38 (GSGAQG) and Lys-55. Catalysis depends on Asp-151, which acts as the Proton acceptor. Phosphothreonine is present on Thr-183. A TXY motif is present at residues 183–185 (TPY). Tyr-185 carries the post-translational modification Phosphotyrosine. Residues 375–426 (QPAPLGAAVTDGSQAHTSSSSGDASSMSTDPTLPSDTDSSLETSAGTLGCCR) are disordered. Low complexity predominate over residues 384-404 (TDGSQAHTSSSSGDASSMSTD). Positions 405–420 (PTLPSDTDSSLETSAG) are enriched in polar residues.

This sequence belongs to the protein kinase superfamily. CMGC Ser/Thr protein kinase family. MAP kinase subfamily. Mg(2+) is required as a cofactor. Dually phosphorylated on Thr-183 and Tyr-185, which activates the enzyme. As to expression, strongly expressed in presumptive ectoderm and mesoderm regions and weakly expressed in endoderm regions during early stages of embryo development. Expressed in the head and dorsal regions during neurula and tailbud stages.

It is found in the cytoplasm. The protein resides in the nucleus. Its subcellular location is the synapse. The catalysed reaction is L-seryl-[protein] + ATP = O-phospho-L-seryl-[protein] + ADP + H(+). It carries out the reaction L-threonyl-[protein] + ATP = O-phospho-L-threonyl-[protein] + ADP + H(+). Activated by threonine and tyrosine phosphorylation, potentially by the dual-specificity kinase, MKK7. Indirectly activated by Wnt5a. Its function is as follows. Responds to activation by environmental stress and pro-inflammatory cytokines by phosphorylating a number of transcription factors, and thus regulating transcriptional activity. Regulates morphogenic cell movements, controlling convergent extension during gastrulation. May play a role in the regulation of the circadian clock. The sequence is that of Mitogen-activated protein kinase 8 (mapk8) from Xenopus laevis (African clawed frog).